Reading from the N-terminus, the 188-residue chain is GMP synthase [glutamine-hydrolyzing] subunit A (188 aa).

In terms of domain architecture, Glutamine amidotransferase type-1 spans 2-188 (KVGLVYYGGQ…FKNFLGVCRK (187 aa)). Cysteine 79 serves as the catalytic Nucleophile. Catalysis depends on residues histidine 166 and glutamate 168.

In terms of assembly, heterodimer composed of a glutamine amidotransferase subunit (A) and a GMP-binding subunit (B).

The catalysed reaction is XMP + L-glutamine + ATP + H2O = GMP + L-glutamate + AMP + diphosphate + 2 H(+). It functions in the pathway purine metabolism; GMP biosynthesis; GMP from XMP (L-Gln route): step 1/1. In terms of biological role, catalyzes the synthesis of GMP from XMP. In Saccharolobus solfataricus (strain ATCC 35092 / DSM 1617 / JCM 11322 / P2) (Sulfolobus solfataricus), this protein is GMP synthase [glutamine-hydrolyzing] subunit A.